Here is a 371-residue protein sequence, read N- to C-terminus: MPEQPIAVAMSGGVDSSVVAAMLVREGRTVVGMTMQLWNQRRLPELAVEGATTGRCCSLDDVYDARRVAEQVGIPYYVVNFEEQFEEHVVKPFVDEYLAGRTPIPCTLCNNYIKFDRFLEMADSVGAYHMATGHYARIRHDEATGRYQLLRAVDDSKDQTYFLFGLTQAQLARTLFPLGELNKPEVRDMARSMDLAVAAKGDSQEICFVPNGDYAAFMSAYLKEKGVAVEETSGEIVTTDGRTLGRHEGVHRFTVGQRKGLGVATGEPLYVISTNPANHQVVVGGNDDLLRGGFTAKDVNWISIAGVEPGAPVRAQVKIRNRHAAAPARLVATSDRDRVEVVFDEAQRAVTPGQGAVFYAGDLVLGGGWIE.

Residues Ala-9–Ser-16 and Met-35 each bind ATP. Cys-109 functions as the Nucleophile in the catalytic mechanism. An intrachain disulfide couples Cys-109 to Cys-207. ATP is bound at residue Gly-133. Residues Lys-157–Gln-159 are interaction with tRNA. Cys-207 functions as the Cysteine persulfide intermediate in the catalytic mechanism.

The protein belongs to the MnmA/TRMU family.

It is found in the cytoplasm. The catalysed reaction is S-sulfanyl-L-cysteinyl-[protein] + uridine(34) in tRNA + AH2 + ATP = 2-thiouridine(34) in tRNA + L-cysteinyl-[protein] + A + AMP + diphosphate + H(+). In terms of biological role, catalyzes the 2-thiolation of uridine at the wobble position (U34) of tRNA, leading to the formation of s(2)U34. This is tRNA-specific 2-thiouridylase MnmA from Solibacter usitatus (strain Ellin6076).